A 528-amino-acid polypeptide reads, in one-letter code: Bifunctional purine biosynthesis protein PurH (528 aa).

In terms of domain architecture, MGS-like spans Thr2 to Val149.

Belongs to the PurH family.

It catalyses the reaction (6R)-10-formyltetrahydrofolate + 5-amino-1-(5-phospho-beta-D-ribosyl)imidazole-4-carboxamide = 5-formamido-1-(5-phospho-D-ribosyl)imidazole-4-carboxamide + (6S)-5,6,7,8-tetrahydrofolate. It carries out the reaction IMP + H2O = 5-formamido-1-(5-phospho-D-ribosyl)imidazole-4-carboxamide. It participates in purine metabolism; IMP biosynthesis via de novo pathway; 5-formamido-1-(5-phospho-D-ribosyl)imidazole-4-carboxamide from 5-amino-1-(5-phospho-D-ribosyl)imidazole-4-carboxamide (10-formyl THF route): step 1/1. The protein operates within purine metabolism; IMP biosynthesis via de novo pathway; IMP from 5-formamido-1-(5-phospho-D-ribosyl)imidazole-4-carboxamide: step 1/1. The protein is Bifunctional purine biosynthesis protein PurH of Roseobacter denitrificans (strain ATCC 33942 / OCh 114) (Erythrobacter sp. (strain OCh 114)).